The sequence spans 1223 residues: A disintegrin and metalloproteinase with thrombospondin motifs 14 (1223 aa).

The first 22 residues, 1-22 (MAPLRALLSYLLPLHCALCAAA), serve as a signal peptide directing secretion. Positions 23–252 (GSRTPELHLS…QLGDTERKRR (230 aa)) are excised as a propeptide. N109 carries N-linked (GlcNAc...) asparagine glycosylation. Residues 259-460 (YSIEVLLVVD…PSYDCLLDDP (202 aa)) form the Peptidase M12B domain. 3 disulfide bridges follow: C336–C382, C376–C455, and C415–C441. Zn(2+) is bound at residue H398. The active site involves E399. Zn(2+)-binding residues include H402 and H408. The 91-residue stretch at 461–551 (FDPAWPQPPE…WKSPEQTYGQ (91 aa)) folds into the Disintegrin domain. An N-linked (GlcNAc...) asparagine glycan is attached at N475. 7 disulfides stabilise this stretch: C482–C507, C493–C516, C502–C535, C529–C540, C564–C601, C568–C606, and C579–C591. The TSP type-1 1 domain maps to 552-607 (DGGWSSWTKFGSCSRSCGGGVRSRSRSCNNPSPAYGGRLCLGPMFEYQVCNSEECP). The interval 730–846 (LKLVQIPAGA…GSNNVLLEEM (117 aa)) is spacer. 3 TSP type-1 domains span residues 847 to 907 (DTYE…HPCS), 908 to 967 (QPVW…LRVP), and 968 to 1022 (CPAQ…PACG). The N-linked (GlcNAc...) asparagine glycan is linked to N941. Disulfide bonds link C980-C1016, C984-C1021, and C995-C1005. Residue N1027 is glycosylated (N-linked (GlcNAc...) asparagine). Residues 1059 to 1097 (STEPCTGDRSVFCQMEVLDRYCSIPGYHRLCCVSCIKKA) enclose the PLAC domain. The disordered stretch occupies residues 1100 to 1223 (PNPGPDPGPT…TSLPAASPVT (124 aa)). Residues 1101 to 1125 (NPGPDPGPTSLPPFSTPGSPLPGPQ) are compositionally biased toward pro residues. Residues 1199 to 1211 (PEDKGQPGEDLRH) are compositionally biased toward basic and acidic residues.

The precursor is cleaved by a furin endopeptidase. Post-translationally, glycosylated. Can be O-fucosylated by POFUT2 on a serine or a threonine residue found within the consensus sequence C1-X(2)-(S/T)-C2-G of the TSP type-1 repeat domains where C1 and C2 are the first and second cysteine residue of the repeat, respectively. Fucosylated repeats can then be further glycosylated by the addition of a beta-1,3-glucose residue by the glucosyltransferase, B3GALTL. Fucosylation mediates the efficient secretion of ADAMTS family members. Can also be C-glycosylated with one or two mannose molecules on tryptophan residues within the consensus sequence W-X-X-W of the TPRs, and N-glycosylated. These other glycosylations can also facilitate secretion. In terms of tissue distribution, expressed in retina and at low levels in brain, lung and placenta. High expression in fetal tissues.

It is found in the secreted. It localises to the extracellular space. The protein resides in the extracellular matrix. Functionally, has aminoprocollagen type I processing activity in the absence of ADAMTS2. Seems to be synthesized as a latent enzyme that requires activation to display aminoprocollagen peptidase activity. Cleaves lysyl oxidase LOX at a site downstream of its propeptide cleavage site to produce a short LOX form. The chain is A disintegrin and metalloproteinase with thrombospondin motifs 14 (ADAMTS14) from Homo sapiens (Human).